Here is a 184-residue protein sequence, read N- to C-terminus: Ethylene-responsive transcription factor ERF122 (184 aa).

Residues 120–177 (KYKGVRKKPSGKWAAEIWDPRSKSRRWLGTFLTAEMAAQSYNDAAAEYRARRGKTNGE) constitute a DNA-binding region (AP2/ERF).

Belongs to the AP2/ERF transcription factor family. ERF subfamily.

Its subcellular location is the nucleus. Probably acts as a transcriptional activator. Binds to the GCC-box pathogenesis-related promoter element. May be involved in the regulation of gene expression by stress factors and by components of stress signal transduction pathways. The protein is Ethylene-responsive transcription factor ERF122 (ERF122) of Arabidopsis thaliana (Mouse-ear cress).